A 52-amino-acid chain; its full sequence is Sperm protamine P1 (52 aa).

Residues 1-27 (MARYSCCRSHSRSRSRRRRQRCRRRRR) form a disordered region. Residues 9–27 (SHSRSRSRRRRQRCRRRRR) show a composition bias toward basic residues.

It belongs to the protamine P1 family. In terms of tissue distribution, testis.

The protein localises to the nucleus. It localises to the chromosome. Functionally, protamines substitute for histones in the chromatin of sperm during the haploid phase of spermatogenesis. They compact sperm DNA into a highly condensed, stable and inactive complex. The sequence is that of Sperm protamine P1 (PRM1) from Rhinolophus ferrumequinum (Greater horseshoe bat).